The primary structure comprises 551 residues: Glucans biosynthesis protein D (551 aa).

Residues 1 to 32 (MDRRRFIKGSMAMAAVCGTSGIASLFSQAAFA) constitute a signal peptide (tat-type signal).

It belongs to the OpgD/OpgG family. Post-translationally, predicted to be exported by the Tat system. The position of the signal peptide cleavage has not been experimentally proven.

The protein resides in the periplasm. It participates in glycan metabolism; osmoregulated periplasmic glucan (OPG) biosynthesis. Functionally, probably involved in the control of the structural glucose backbone of osmoregulated periplasmic glucans (OPGs). The sequence is that of Glucans biosynthesis protein D (mdoD) from Shigella flexneri.